A 151-amino-acid chain; its full sequence is Cell division protein SepF (151 aa).

The disordered stretch occupies residues 31-53 (EEVEEPRRRSRTGVKQERETGQN).

Belongs to the SepF family. As to quaternary structure, homodimer. Interacts with FtsZ.

Its subcellular location is the cytoplasm. Functionally, cell division protein that is part of the divisome complex and is recruited early to the Z-ring. Probably stimulates Z-ring formation, perhaps through the cross-linking of FtsZ protofilaments. Its function overlaps with FtsA. The protein is Cell division protein SepF of Halalkalibacterium halodurans (strain ATCC BAA-125 / DSM 18197 / FERM 7344 / JCM 9153 / C-125) (Bacillus halodurans).